Reading from the N-terminus, the 642-residue chain is 3D-(3,5/4)-trihydroxycyclohexane-1,2-dione hydrolase (642 aa).

Residue Glu71 coordinates thiamine diphosphate. A thiamine pyrophosphate binding region spans residues 446–526; that stretch reads SLPGDVQRIW…INILVFDNSG (81 aa). Positions 497 and 524 each coordinate Mg(2+).

It belongs to the TPP enzyme family. Mg(2+) serves as cofactor. The cofactor is thiamine diphosphate.

It catalyses the reaction 3D-3,5/4-trihydroxycyclohexane-1,2-dione + H2O = 5-deoxy-D-glucuronate + H(+). It functions in the pathway polyol metabolism; myo-inositol degradation into acetyl-CoA; acetyl-CoA from myo-inositol: step 3/7. In terms of biological role, involved in the cleavage of the C1-C2 bond of 3D-(3,5/4)-trihydroxycyclohexane-1,2-dione (THcHDO) to yield 5-deoxy-glucuronate (5DG). This chain is 3D-(3,5/4)-trihydroxycyclohexane-1,2-dione hydrolase, found in Lacticaseibacillus casei (Lactobacillus casei).